A 395-amino-acid chain; its full sequence is Carbohydrate sulfotransferase 5 (395 aa).

At M1–S7 the chain is on the cytoplasmic side. Residues S8–V26 traverse the membrane as a helical; Signal-anchor for type II membrane protein segment. Residues S27 to S395 are Lumenal-facing. W49–F55 is a binding site for 3'-phosphoadenylyl sulfate. N116 and N142 each carry an N-linked (GlcNAc...) asparagine glycan. Residue R202 to S210 participates in 3'-phosphoadenylyl sulfate binding. N-linked (GlcNAc...) asparagine glycans are attached at residues N229 and N305.

The protein belongs to the sulfotransferase 1 family. Gal/GlcNAc/GalNAc subfamily. As to expression, expressed in cornea.

It is found in the golgi apparatus membrane. Its function is as follows. Sulfotransferase that utilizes 3'-phospho-5'-adenylyl sulfate (PAPS) as sulfonate donor to catalyze the transfer of sulfate to position 6 of non-reducing N-acetylglucosamine (GlcNAc) residues of keratan. Mediates sulfation of keratan in cornea. Keratan sulfate plays a central role in maintaining corneal transparency. Acts on the non-reducing terminal GlcNAc of short and long carbohydrate substrates that have poly-N-acetyllactosamine structures. May also have activity toward O-linked sugars of mucin-type acceptors. The sequence is that of Carbohydrate sulfotransferase 5 (Chst5) from Mus musculus (Mouse).